Reading from the N-terminus, the 201-residue chain is Orotidine 5'-phosphate decarboxylase (201 aa).

Residues Asp8, Lys26, 52 to 61 (DLKFCDIPST), Thr106, Arg153, Gln161, Gly180, and Arg181 each bind substrate. Lys54 serves as the catalytic Proton donor.

Belongs to the OMP decarboxylase family. Type 1 subfamily. In terms of assembly, homodimer.

The enzyme catalyses orotidine 5'-phosphate + H(+) = UMP + CO2. Its pathway is pyrimidine metabolism; UMP biosynthesis via de novo pathway; UMP from orotate: step 2/2. Catalyzes the decarboxylation of orotidine 5'-monophosphate (OMP) to uridine 5'-monophosphate (UMP). The chain is Orotidine 5'-phosphate decarboxylase (pyrF) from Thermotoga maritima (strain ATCC 43589 / DSM 3109 / JCM 10099 / NBRC 100826 / MSB8).